The primary structure comprises 307 residues: Acetyl-coenzyme A carboxylase carboxyl transferase subunit beta (307 aa).

One can recognise a CoA carboxyltransferase N-terminal domain in the interval L25–P294.

It belongs to the AccD/PCCB family. As to quaternary structure, acetyl-CoA carboxylase is a heterohexamer composed of biotin carboxyl carrier protein (AccB), biotin carboxylase (AccC) and two subunits each of ACCase subunit alpha (AccA) and ACCase subunit beta (AccD).

It localises to the cytoplasm. It carries out the reaction N(6)-carboxybiotinyl-L-lysyl-[protein] + acetyl-CoA = N(6)-biotinyl-L-lysyl-[protein] + malonyl-CoA. Its pathway is lipid metabolism; malonyl-CoA biosynthesis; malonyl-CoA from acetyl-CoA: step 1/1. Functionally, component of the acetyl coenzyme A carboxylase (ACC) complex. Biotin carboxylase (BC) catalyzes the carboxylation of biotin on its carrier protein (BCCP) and then the CO(2) group is transferred by the transcarboxylase to acetyl-CoA to form malonyl-CoA. This is Acetyl-coenzyme A carboxylase carboxyl transferase subunit beta from Chelativorans sp. (strain BNC1).